A 494-amino-acid polypeptide reads, in one-letter code: Keratin, type I cytoskeletal 12 (494 aa).

Positions 1-12 are enriched in polar residues; sequence MDLSNNTMSLSV. The segment at 1–32 is disordered; sequence MDLSNNTMSLSVRTPGLSRRLSSQSVIGRPRG. The head stretch occupies residues 1 to 124; that stretch reads MDLSNNTMSL…GNDGGLLSGS (124 aa). Residues 125–160 are coil 1A; it reads EKETMQNLNDRLASYLDKVRALEEANTELENKIREW. One can recognise an IF rod domain in the interval 125–440; sequence EKETMQNLND…RLLDGEAQGD (316 aa). The interval 164 to 182 is linker 1; sequence RGTGTADASQSDYSKYYPL. The coil 1B stretch occupies residues 183-274; that stretch reads IEDLRNKIIS…KNHEDELQSF (92 aa). The segment at 275-297 is linker 12; that stretch reads RVGGPGEVSVEMDAAPGVDLTRL. Positions 298-435 are coil 2; sequence LNDMRAQYET…IETYRRLLDG (138 aa). The tail stretch occupies residues 436-494; that stretch reads EAQGDGLEESLFVTDSKSQAQSTDSSKDPTKTRKIKTVVQEMVNGEVVSSQVQEIEELM. The tract at residues 446 to 468 is disordered; that stretch reads LFVTDSKSQAQSTDSSKDPTKTR. Residues 448–459 show a composition bias toward polar residues; sequence VTDSKSQAQSTD.

Belongs to the intermediate filament family. Heterotetramer of two type I and two type II keratins. Keratin-3 associates with keratin-12. In terms of tissue distribution, expressed in the corneal epithelium (at protein level).

In terms of biological role, involved in corneal epithelium organization, integrity and corneal keratin expression. The sequence is that of Keratin, type I cytoskeletal 12 (KRT12) from Homo sapiens (Human).